A 34-amino-acid chain; its full sequence is Photosystem I reaction center subunit XII (34 aa).

The helical transmembrane segment at 4-24 (VLSAPEVFIALVVAAHAAVLA) threads the bilayer.

Belongs to the PsaM family.

The protein localises to the cellular thylakoid membrane. This is Photosystem I reaction center subunit XII from Synechococcus sp. (strain CC9605).